Here is a 117-residue protein sequence, read N- to C-terminus: Large ribosomal subunit protein bL19 (117 aa).

This sequence belongs to the bacterial ribosomal protein bL19 family.

In terms of biological role, this protein is located at the 30S-50S ribosomal subunit interface and may play a role in the structure and function of the aminoacyl-tRNA binding site. This Shewanella baltica (strain OS155 / ATCC BAA-1091) protein is Large ribosomal subunit protein bL19.